A 163-amino-acid chain; its full sequence is Nucleotide-binding protein HDEF_1968 (163 aa).

It belongs to the YajQ family.

Functionally, nucleotide-binding protein. This is Nucleotide-binding protein HDEF_1968 from Hamiltonella defensa subsp. Acyrthosiphon pisum (strain 5AT).